A 416-amino-acid chain; its full sequence is Serine hydroxymethyltransferase (416 aa).

(6S)-5,6,7,8-tetrahydrofolate contacts are provided by residues Leu-118 and 122–124 (GHL). Position 226 is an N6-(pyridoxal phosphate)lysine (Lys-226). Residues Glu-242 and 350 to 352 (SPF) each bind (6S)-5,6,7,8-tetrahydrofolate.

This sequence belongs to the SHMT family. As to quaternary structure, homodimer. Pyridoxal 5'-phosphate serves as cofactor.

Its subcellular location is the cytoplasm. It carries out the reaction (6R)-5,10-methylene-5,6,7,8-tetrahydrofolate + glycine + H2O = (6S)-5,6,7,8-tetrahydrofolate + L-serine. Its pathway is one-carbon metabolism; tetrahydrofolate interconversion. The protein operates within amino-acid biosynthesis; glycine biosynthesis; glycine from L-serine: step 1/1. Functionally, catalyzes the reversible interconversion of serine and glycine with tetrahydrofolate (THF) serving as the one-carbon carrier. This reaction serves as the major source of one-carbon groups required for the biosynthesis of purines, thymidylate, methionine, and other important biomolecules. Also exhibits THF-independent aldolase activity toward beta-hydroxyamino acids, producing glycine and aldehydes, via a retro-aldol mechanism. This is Serine hydroxymethyltransferase from Helicobacter pylori (strain G27).